The sequence spans 139 residues: Hydrogenase maturation factor HypA (139 aa).

Histidine 2 serves as a coordination point for Ni(2+). The Zn(2+) site is built by cysteine 73, cysteine 76, cysteine 110, and cysteine 113.

This sequence belongs to the HypA/HybF family.

Involved in the maturation of [NiFe] hydrogenases. Required for nickel insertion into the metal center of the hydrogenase. The protein is Hydrogenase maturation factor HypA of Thermococcus onnurineus (strain NA1).